Consider the following 432-residue polypeptide: Trigger factor (432 aa).

Residues 161–246 (DDRVTIDFVG…LKKIENMVLP (86 aa)) form the PPIase FKBP-type domain.

This sequence belongs to the FKBP-type PPIase family. Tig subfamily.

It localises to the cytoplasm. It catalyses the reaction [protein]-peptidylproline (omega=180) = [protein]-peptidylproline (omega=0). Functionally, involved in protein export. Acts as a chaperone by maintaining the newly synthesized protein in an open conformation. Functions as a peptidyl-prolyl cis-trans isomerase. This chain is Trigger factor, found in Haemophilus influenzae (strain PittEE).